The chain runs to 223 residues: Phosphoribosylformylglycinamidine synthase subunit PurQ (223 aa).

Positions F3–V223 constitute a Glutamine amidotransferase type-1 domain. The active-site Nucleophile is the C85. Active-site residues include H193 and E195.

As to quaternary structure, part of the FGAM synthase complex composed of 1 PurL, 1 PurQ and 2 PurS subunits.

It is found in the cytoplasm. It catalyses the reaction N(2)-formyl-N(1)-(5-phospho-beta-D-ribosyl)glycinamide + L-glutamine + ATP + H2O = 2-formamido-N(1)-(5-O-phospho-beta-D-ribosyl)acetamidine + L-glutamate + ADP + phosphate + H(+). The catalysed reaction is L-glutamine + H2O = L-glutamate + NH4(+). It functions in the pathway purine metabolism; IMP biosynthesis via de novo pathway; 5-amino-1-(5-phospho-D-ribosyl)imidazole from N(2)-formyl-N(1)-(5-phospho-D-ribosyl)glycinamide: step 1/2. Functionally, part of the phosphoribosylformylglycinamidine synthase complex involved in the purines biosynthetic pathway. Catalyzes the ATP-dependent conversion of formylglycinamide ribonucleotide (FGAR) and glutamine to yield formylglycinamidine ribonucleotide (FGAM) and glutamate. The FGAM synthase complex is composed of three subunits. PurQ produces an ammonia molecule by converting glutamine to glutamate. PurL transfers the ammonia molecule to FGAR to form FGAM in an ATP-dependent manner. PurS interacts with PurQ and PurL and is thought to assist in the transfer of the ammonia molecule from PurQ to PurL. The polypeptide is Phosphoribosylformylglycinamidine synthase subunit PurQ (Staphylococcus epidermidis (strain ATCC 35984 / DSM 28319 / BCRC 17069 / CCUG 31568 / BM 3577 / RP62A)).